The primary structure comprises 104 residues: Increased recombination centers protein 13 (104 aa).

A helical transmembrane segment spans residues 63-83; the sequence is LVHLFSYVFFLFLLKICVDVL.

The protein resides in the membrane. Functionally, may be involved in a pathway contributing to genomic integrity. This Saccharomyces cerevisiae (strain ATCC 204508 / S288c) (Baker's yeast) protein is Increased recombination centers protein 13 (IRC13).